The sequence spans 207 residues: Protein GrpE (207 aa).

Residues 1 to 11 (MTETDGQKDNN) are compositionally biased toward basic and acidic residues. Residues 1–40 (MTETDGQKDNNQDTAQAAADPVVSKPYIMPDDPEEGSNEA) are disordered.

This sequence belongs to the GrpE family. Homodimer.

It localises to the cytoplasm. Participates actively in the response to hyperosmotic and heat shock by preventing the aggregation of stress-denatured proteins, in association with DnaK and GrpE. It is the nucleotide exchange factor for DnaK and may function as a thermosensor. Unfolded proteins bind initially to DnaJ; upon interaction with the DnaJ-bound protein, DnaK hydrolyzes its bound ATP, resulting in the formation of a stable complex. GrpE releases ADP from DnaK; ATP binding to DnaK triggers the release of the substrate protein, thus completing the reaction cycle. Several rounds of ATP-dependent interactions between DnaJ, DnaK and GrpE are required for fully efficient folding. This is Protein GrpE from Rhodopseudomonas palustris (strain ATCC BAA-98 / CGA009).